A 293-amino-acid polypeptide reads, in one-letter code: Elongation factor Ts (293 aa).

An involved in Mg(2+) ion dislocation from EF-Tu region spans residues 81–84; that stretch reads TDFV.

Belongs to the EF-Ts family.

It localises to the cytoplasm. Functionally, associates with the EF-Tu.GDP complex and induces the exchange of GDP to GTP. It remains bound to the aminoacyl-tRNA.EF-Tu.GTP complex up to the GTP hydrolysis stage on the ribosome. The sequence is that of Elongation factor Ts from Teredinibacter turnerae (strain ATCC 39867 / T7901).